The following is a 125-amino-acid chain: Acyl carrier protein, mitochondrial (125 aa).

The transit peptide at 1-36 (MFRSVCRISSRVAPSAYRTIMGRSVMSNTILAQRFY) directs the protein to the mitochondrion. The Carrier domain maps to 43–122 (DQVSQRVIDV…ETVDYIASNP (80 aa)). Ser82 bears the O-(pantetheine 4'-phosphoryl)serine mark.

This sequence belongs to the acyl carrier protein (ACP) family. Complex I is composed of about 30 different subunits. In terms of processing, 4'-phosphopantetheine is transferred from CoA to a specific serine of apo-ACP by acpS. This modification is essential for activity because fatty acids are bound in thioester linkage to the sulfhydryl of the prosthetic group.

It localises to the mitochondrion. The protein operates within lipid metabolism; fatty acid biosynthesis. Carrier of the growing fatty acid chain in fatty acid biosynthesis. May be involved in the synthesis of very-long-chain fatty acids. Accessory and non-catalytic subunit of the mitochondrial membrane respiratory chain NADH dehydrogenase (Complex I), which functions in the transfer of electrons from NADH to the respiratory chain. The protein is Acyl carrier protein, mitochondrial (ACP1) of Saccharomyces cerevisiae (strain ATCC 204508 / S288c) (Baker's yeast).